The primary structure comprises 218 residues: Adenylate kinase (218 aa).

Residue 10 to 15 participates in ATP binding; it reads GAGKGT. Residues 30-59 are NMP; it reads STGDMLRAAVKQGTPLGQEAKKVMDAGGLV. Residues Thr-31, Arg-36, 57 to 59, 85 to 88, and Gln-92 contribute to the AMP site; these read GLV and GFPR. The tract at residues 122–159 is LID; that stretch reads GRRVHPASGRSYHVRFNPPKQEGLDDVTGEPLVQRDDD. Residues Arg-123 and 132 to 133 each bind ATP; that span reads SY. AMP-binding residues include Arg-156 and Arg-167. Gly-203 lines the ATP pocket.

Belongs to the adenylate kinase family. As to quaternary structure, monomer.

It is found in the cytoplasm. The enzyme catalyses AMP + ATP = 2 ADP. It participates in purine metabolism; AMP biosynthesis via salvage pathway; AMP from ADP: step 1/1. Catalyzes the reversible transfer of the terminal phosphate group between ATP and AMP. Plays an important role in cellular energy homeostasis and in adenine nucleotide metabolism. This Bordetella petrii (strain ATCC BAA-461 / DSM 12804 / CCUG 43448) protein is Adenylate kinase.